The following is a 495-amino-acid chain: Oxidoreductase AflY (495 aa).

The tract at residues 1–22 (MGSHAPAVAGKPDPKKGPYQAT) is disordered.

It belongs to the questin oxidase family.

It participates in mycotoxin biosynthesis; aflatoxin biosynthesis. Oxidoreductase; part of the gene cluster that mediates the biosynthesis of aflatoxins, a group of polyketide-derived furanocoumarins, and part of the most toxic and carcinogenic compounds among the known mycotoxins. The four major aflatoxins produced by A.parasiticus are aflatoxin B1 (AFB1), aflatoxin B2 (AFB2), aflatoxin G1 (AFG1) and aflatoxin G2 (AFG2). Within the aflatoxin pathway, the oxidoreductase aflY seems to be involved in the conversion of versicolorin A (VERA) to demethylsterigmatocystin (DMST), through probable Baeyer-Villiger oxidation required for the formation of the xanthone ring. The biosynthesis of aflatoxins begins with the norsolorinic acid synthase aflC that combines a hexanoyl starter unit produced by the fatty acid synthase aflA/aflB and 7 malonyl-CoA extender units to synthesize the precursor NOR. The second step is the conversion of NOR to averantin and requires the norsolorinic acid ketoreductase aflD, which catalyzes the dehydration of norsolorinic acid to form (1'S)-averantin. The norsolorinic acid reductases aflE and aflF may also play a role in the conversion of NOR to AVN. The cytochrome P450 monooxygenase aflG then catalyzes the hydroxylation of AVN to 5'hydroxyaverantin (HAVN). The next step is performed by the 5'-hydroxyaverantin dehydrogenase aflH that transforms HAVN to 5'-oxoaverantin (OAVN) which is further converted to averufin (AVF) by aflK that plays a dual role in the pathway, as a 5'-oxoaverantin cyclase that mediates conversion of 5'-oxoaverantin, as well as a versicolorin B synthase in a later step in the pathway. The averufin oxidase aflI catalyzes the conversion of AVF to versiconal hemiacetal acetate (VHA). VHA is then the substrate for the versiconal hemiacetal acetate esterase aflJ to yield versiconal (VAL). Versicolorin B synthase aflK then converts VAL to versicolorin B (VERB) by closing the bisfuran ring of aflatoxin which is required for DNA-binding, thus giving to aflatoxin its activity as a mutagen. Then, the activity of the versicolorin B desaturase aflL leads to versicolorin A (VERA). A branch point starts from VERB since it can also be converted to dihydrodemethylsterigmatocystin (DMDHST), probably also by aflL, VERA being a precursor for aflatoxins B1 and G1, and DMDHST for aflatoxins B2 and G2. Next, the versicolorin reductase aflM and the cytochrome P450 monooxygenase aflN are involved in conversion of VERA to demethylsterigmatocystin (DMST). AflX and aflY seem also involved in this step, through probable aflX-mediated epoxide ring-opening step following versicolorin A oxidation and aflY-mediated Baeyer-Villiger oxidation required for the formation of the xanthone ring. The methyltransferase aflO then leads to the modification of DMST to sterigmatocystin (ST), and of DMDHST to dihydrosterigmatocystin (DHST). Both ST and DHST are then substrates of the O-methyltransferase aflP to yield O-methylsterigmatocystin (OMST) and dihydro-O-methylsterigmatocystin (DHOMST), respectively. Finally OMST is converted to aflatoxins B1 and G1, and DHOMST to aflatoxins B2 and G2, via the action of several enzymes including O-methylsterigmatocystin oxidoreductase aflQ, the cytochrome P450 monooxygenase aflU, but also the NADH-dependent flavin oxidoreductase nadA which is specifically required for the synthesis of AFG1. This is Oxidoreductase AflY from Aspergillus parasiticus (strain ATCC 56775 / NRRL 5862 / SRRC 143 / SU-1).